A 393-amino-acid polypeptide reads, in one-letter code: Formate-dependent phosphoribosylglycinamide formyltransferase (393 aa).

N(1)-(5-phospho-beta-D-ribosyl)glycinamide contacts are provided by residues 22 to 23 (EL) and Glu-82. Residues Arg-114, Lys-155, 160–165 (SSGKGQ), 195–198 (EGFI), and Glu-203 each bind ATP. An ATP-grasp domain is found at 119 to 308 (RLAAEELGLP…EFALHARAIL (190 aa)). Mg(2+)-binding residues include Glu-267 and Glu-279. N(1)-(5-phospho-beta-D-ribosyl)glycinamide is bound by residues Asp-286, Lys-356, and 363–364 (RR).

The protein belongs to the PurK/PurT family. Homodimer.

It carries out the reaction N(1)-(5-phospho-beta-D-ribosyl)glycinamide + formate + ATP = N(2)-formyl-N(1)-(5-phospho-beta-D-ribosyl)glycinamide + ADP + phosphate + H(+). It participates in purine metabolism; IMP biosynthesis via de novo pathway; N(2)-formyl-N(1)-(5-phospho-D-ribosyl)glycinamide from N(1)-(5-phospho-D-ribosyl)glycinamide (formate route): step 1/1. Involved in the de novo purine biosynthesis. Catalyzes the transfer of formate to 5-phospho-ribosyl-glycinamide (GAR), producing 5-phospho-ribosyl-N-formylglycinamide (FGAR). Formate is provided by PurU via hydrolysis of 10-formyl-tetrahydrofolate. The polypeptide is Formate-dependent phosphoribosylglycinamide formyltransferase (Azoarcus sp. (strain BH72)).